The primary structure comprises 359 residues: TGACG-sequence-specific DNA-binding protein TGA-1A (359 aa).

Positions 44–54 are enriched in basic and acidic residues; sequence KRLDNETEDTS. Positions 44-72 are disordered; the sequence is KRLDNETEDTSHGTVGTSNRYEPETSKPV. The region spanning 72–135 is the bZIP domain; the sequence is VEKVLRRLAQ…GGVDASQLSY (64 aa). A coiled-coil region spans residues 73-125; it reads EKVLRRLAQNREAARKSRLRKKAYVQQLENSKLKLIQLEQELERARKQGMCVG. The basic motif stretch occupies residues 74–94; sequence KVLRRLAQNREAARKSRLRKK. Positions 100–114 are leucine-zipper; it reads LENSKLKLIQLEQEL. Residues 143 to 354 enclose the DOG1 domain; that stretch reads TAVFDMEYGH…RVLSSQWATR (212 aa).

Belongs to the bZIP family. Binds DNA as a dimer.

Its subcellular location is the nucleus. Functionally, transcriptional activator that binds specifically to the DNA sequence 5'-TGACG-3'. Recognizes ocs elements like the as-1 motif of the cauliflower mosaic virus 35S promoter. Binding to the as-1-like cis elements mediate auxin- and salicylic acid-inducible transcription. Could also bind to the Hex-motif (5'-TGACGTGG-3') another cis-acting element found in plant histone promoters. This is TGACG-sequence-specific DNA-binding protein TGA-1A (TGA1A) from Nicotiana tabacum (Common tobacco).